The primary structure comprises 318 residues: Strigolactone esterase D14 (318 aa).

A compositionally biased stretch (pro residues) spans 1 to 11; the sequence is MLRSTHPPPSS. Residues 1–48 form a disordered region; that stretch reads MLRSTHPPPSSPSSSSSGGGGGGGSSASSSSEKTMVGGGGGGGGGSGS. Residues 36–47 are compositionally biased toward gly residues; sequence VGGGGGGGGGSG. Catalysis depends on Ser-147, which acts as the Nucleophile. Substrate-binding residues include Ser-147 and Cys-241. Active-site residues include Asp-268 and His-297. Substrate is bound at residue His-297.

This sequence belongs to the AB hydrolase superfamily. Interacts with D53. The interaction between D53 and D14 is enhanced in the presence of strigolactones. The interaction with D53 occurs in the presence of (2'R) stereoisomers of strigolactones, but not (2'S) stereoisomers. Interacts with SLR1 in a strigolactone-dependent manner. Interacts with D3 in a strigolactone-dependent manner. As to expression, expressed in the parenchyma cells of the root stele and lateral roots, vascular tissues of vein and leaf sheath, ligule base, auricle base and stem base.

The protein resides in the cytoplasm. The protein localises to the nucleus. In terms of biological role, involved in strigolactone (SL) signaling pathway. May function downstream of SL synthesis, as a component of hormone signaling or as an enzyme that participates in the conversion of SL to the bioactive form. Strigolactones are hormones that inhibit tillering and shoot branching through the MAX-dependent pathway, contribute to the regulation of shoot architectural response to phosphate-limiting conditions and function as rhizosphere signal that stimulates hyphal branching of arbuscular mycorrhizal fungi and trigger seed germination of root parasitic weeds. Strigolactone-dependent association of D14 with D3 and D53 (a repressor of SL signaling) triggers D53 ubiquitination and degradation. Hydrolyzes the butenolide ring of SLs. A reaction product D-OH is trapped in the cavity of D14, inducing the interaction with SLR1, and probably with other proteins such as D3 and D53. Contributes to the negative regulation of gibberellin signaling. The polypeptide is Strigolactone esterase D14 (Oryza sativa subsp. japonica (Rice)).